The following is a 119-amino-acid chain: Large ribosomal subunit protein uL18 (119 aa).

The protein belongs to the universal ribosomal protein uL18 family. As to quaternary structure, part of the 50S ribosomal subunit; part of the 5S rRNA/L5/L18/L25 subcomplex. Contacts the 5S and 23S rRNAs.

This is one of the proteins that bind and probably mediate the attachment of the 5S RNA into the large ribosomal subunit, where it forms part of the central protuberance. This chain is Large ribosomal subunit protein uL18, found in Borreliella afzelii (strain PKo) (Borrelia afzelii).